Consider the following 393-residue polypeptide: MAAPVSAIGFEGYEKRLEITFSEASIFADPHGRGLRALSRAQIDSVLDLARCTIVSELSNKDFDSYVLSESSLFIYSQKIVIKTCGTTMLLLTIPRILELAEELCMPLAAVKYSRGMFIFPGAQPAPHRSFSEEVDVLNRYFGHLNSGGNAYVIGDPAKPGQKWHIYYATEQPEQPMVTLEMCMTGLDKTKASVFFKTHADGHVSCAKEMTKLSGISDIIPEMEVCDFDFEPCGYSMNAINGSAFSTIHVTPEDGFSYASYEVQGMDASALAYGDIVKRVLRCFGPSEFSVAVTIFGGRGHAATWGKKLDAEAYDCNNVVEQELPCGGVLIYQSFAANEELAVSAGSPRSVFHCFENVESGHPLVKEGKLANLLAWRAEEESLEEGTGALLCE.

Catalysis depends on residues Glu11 and Glu14. Ser71 (schiff-base intermediate with substrate; via pyruvic acid) is an active-site residue. Ser71 carries the post-translational modification Pyruvic acid (Ser); by autocatalysis. Residue Cys85 is the Proton donor; for catalytic activity of the active site. Catalysis depends on proton acceptor; for processing activity residues Ser236 and His249.

Belongs to the eukaryotic AdoMetDC family. Requires pyruvate as cofactor. Post-translationally, is synthesized initially as an inactive proenzyme. Formation of the active enzyme involves a self-maturation process in which the active site pyruvoyl group is generated from an internal serine residue via an autocatalytic post-translational modification. Two non-identical subunits are generated from the proenzyme in this reaction, and the pyruvate is formed at the N-terminus of the alpha chain, which is derived from the carboxyl end of the proenzyme. The post-translation cleavage follows an unusual pathway, termed non-hydrolytic serinolysis, in which the side chain hydroxyl group of the serine supplies its oxygen atom to form the C-terminus of the beta chain, while the remainder of the serine residue undergoes an oxidative deamination to produce ammonia and the pyruvoyl group blocking the N-terminus of the alpha chain.

It catalyses the reaction S-adenosyl-L-methionine + H(+) = S-adenosyl 3-(methylsulfanyl)propylamine + CO2. It participates in amine and polyamine biosynthesis; S-adenosylmethioninamine biosynthesis; S-adenosylmethioninamine from S-adenosyl-L-methionine: step 1/1. In Hordeum chilense (Barley), this protein is S-adenosylmethionine decarboxylase proenzyme (SAMDC).